The sequence spans 489 residues: Serine/threonine-protein kinase BSK2 (489 aa).

Positions 1-30 (MGCLHSKTANLPSSDDPSAPNKPESVNGDQ) are disordered. The N-myristoyl glycine moiety is linked to residue Gly-2. Polar residues predominate over residues 7–16 (KTANLPSSDD). One can recognise a Protein kinase domain in the interval 56 to 322 (SCIVSEGGEK…QEEVASHVLM (267 aa)). ATP-binding positions include 62 to 70 (GGEKAPNVV) and Lys-84. Asp-178 acts as the Proton acceptor in catalysis.

This sequence belongs to the protein kinase superfamily. Ser/Thr protein kinase family. In terms of processing, phosphorylated by BRI1 upon brassinolide (BL) treatment.

The protein localises to the cell membrane. It catalyses the reaction L-seryl-[protein] + ATP = O-phospho-L-seryl-[protein] + ADP + H(+). The enzyme catalyses L-threonyl-[protein] + ATP = O-phospho-L-threonyl-[protein] + ADP + H(+). In terms of biological role, probable serine/threonine kinase that acts as a positive regulator of brassinosteroid (BR) signaling downstream of the receptor kinase BRI1. Mediates signal transduction from BRI1 by functioning as substrate of BRI1. The sequence is that of Serine/threonine-protein kinase BSK2 from Arabidopsis thaliana (Mouse-ear cress).